A 202-amino-acid polypeptide reads, in one-letter code: Large ribosomal subunit protein bL25 (202 aa).

This sequence belongs to the bacterial ribosomal protein bL25 family. CTC subfamily. Part of the 50S ribosomal subunit; part of the 5S rRNA/L5/L18/L25 subcomplex. Contacts the 5S rRNA. Binds to the 5S rRNA independently of L5 and L18.

Its function is as follows. This is one of the proteins that binds to the 5S RNA in the ribosome where it forms part of the central protuberance. This chain is Large ribosomal subunit protein bL25, found in Burkholderia ambifaria (strain MC40-6).